Reading from the N-terminus, the 136-residue chain is Large ribosomal subunit protein uL16 (136 aa).

This sequence belongs to the universal ribosomal protein uL16 family. Part of the 50S ribosomal subunit.

Binds 23S rRNA and is also seen to make contacts with the A and possibly P site tRNAs. In Karelsulcia muelleri (strain GWSS) (Sulcia muelleri), this protein is Large ribosomal subunit protein uL16.